Reading from the N-terminus, the 183-residue chain is uncharacterized protein (183 aa).

Belongs to the chlamydial CPn_0803/CT_584/TC_0873 family.

This is an uncharacterized protein from Chlamydia muridarum (strain MoPn / Nigg).